A 393-amino-acid polypeptide reads, in one-letter code: Dual specificity mitogen-activated protein kinase kinase 1 (393 aa).

The disordered stretch occupies residues 1-27 (MPKKKPTPIQLNPAPDGSAVNGTSSAE). Residues 68–361 (FEKISELGAG…LKQLMVHAFI (294 aa)) form the Protein kinase domain. ATP-binding positions include 74 to 82 (LGAGNGGVV), lysine 97, 143 to 146 (MEHM), and 150 to 153 (SLDQ). Lysine 97 is a binding site for U0126. Residue 144 to 146 (EHM) participates in K-252a binding. The Proton acceptor role is filled by aspartate 190. Residues 192-195 (KPSN) and aspartate 208 each bind ATP. Residue serine 194 participates in K-252a binding. A U0126-binding site is contributed by 208–211 (DFGV). Serine 218 and serine 222 each carry phosphoserine; by BRAF and RAF1. The interval 270 to 307 (ELELMFGCQVEGDAAETPPRPRTPGRPLSSYGMDSRPP) is RAF1-binding. Phosphothreonine is present on threonine 286. Threonine 292 carries the post-translational modification Phosphothreonine; by MAPK1. A Phosphoserine; by PAK modification is found at serine 298.

This sequence belongs to the protein kinase superfamily. STE Ser/Thr protein kinase family. MAP kinase kinase subfamily. As to quaternary structure, found in a complex with at least BRAF, HRAS, MAP2K1, MAPK3/ERK1 and RGS14. Forms a heterodimer with MAP2K2/MEK2. Forms heterodimers with KSR2 which further dimerize to form tetramers. Interacts with KSR1 or KSR2 and BRAF; the interaction with KSR1 or KSR2 mediates KSR1-BRAF or KSR2-BRAF dimerization. Interacts with ARBB2, LAMTOR3 and RAF1. Interacts with MAPK1/ERK2. Interacts with MORG1. Interacts with PPARG. Interacts with isoform 1 of VRK2. Interacts with SGK1. Interacts with BIRC6/bruce. Interacts with KAT7; the interaction promotes KAT7 phosphorylation. Interacts with RAF1 and NEK10; the interaction is required for ERK1/2-signaling pathway activation in response to UV irradiation. Interacts with TRAF3IP3. Interacts with MOS. In terms of assembly, (Microbial infection) Interacts with Yersinia YopJ. Phosphorylation at Ser-218 and Ser-222 by MAP kinase kinase kinases (BRAF or MEKK1) positively regulates kinase activity. Also phosphorylated at Thr-292 by MAPK1/ERK2 and at Ser-298 by PAK. MAPK1/ERK2 phosphorylation of Thr-292 occurs in response to cellular adhesion and leads to inhibition of Ser-298 phosphorylation by PAK. Autophosphorylated at Ser-218 and Ser-222, autophosphosphorylation is promoted by NEK10 following UV irradiation. Post-translationally, (Microbial infection) Acetylation by Yersinia YopJ prevents phosphorylation and activation, thus blocking the MAPK signaling pathway. Widely expressed, with extremely low levels in brain.

The protein localises to the cytoplasm. It is found in the cytoskeleton. It localises to the microtubule organizing center. Its subcellular location is the centrosome. The protein resides in the spindle pole body. The protein localises to the nucleus. It is found in the membrane. The catalysed reaction is L-seryl-[protein] + ATP = O-phospho-L-seryl-[protein] + ADP + H(+). The enzyme catalyses L-threonyl-[protein] + ATP = O-phospho-L-threonyl-[protein] + ADP + H(+). It carries out the reaction L-tyrosyl-[protein] + ATP = O-phospho-L-tyrosyl-[protein] + ADP + H(+). With respect to regulation, ras proteins such as HRAS mediate the activation of RAF proteins such as RAF1 or BRAF which in turn activate extracellular signal-regulated kinases (ERK) through MAPK (mitogen-activated protein kinases) and ERK kinases MAP2K1/MEK1 and MAP2K2/MEK2. Activation occurs through phosphorylation of Ser-218 and Ser-222. MAP2K1/MEK1 binds KSR1 or KSR2 releasing the inhibitory intramolecular interaction between KSR1 or KSR2 protein kinase and N-terminal domains. This allows KSR1 or KSR2 dimerization with BRAF leading to BRAF activation and phosphorylation of MAP2K1. MAP2K1/MEK1 is also the target of negative feed-back regulation by its substrate kinases, such as MAPK1/ERK2. These phosphorylate MAP2K1/MEK1 on Thr-292, thereby facilitating dephosphorylation of the activating residues Ser-218 and Ser-222. Inhibited by serine/threonine phosphatase 2A. Many inhibitors have been identified including pyrrole derivatives, TAK-733 (one of a series of 8-methylpyrido[2,3-d]pyrimidine-4,7(3H,8H)-dione derivatives), CH4987655 and RDEA119/BAY 869766. Functionally, dual specificity protein kinase which acts as an essential component of the MAP kinase signal transduction pathway. Binding of extracellular ligands such as growth factors, cytokines and hormones to their cell-surface receptors activates RAS and this initiates RAF1 activation. RAF1 then further activates the dual-specificity protein kinases MAP2K1/MEK1 and MAP2K2/MEK2. Both MAP2K1/MEK1 and MAP2K2/MEK2 function specifically in the MAPK/ERK cascade, and catalyze the concomitant phosphorylation of a threonine and a tyrosine residue in a Thr-Glu-Tyr sequence located in the extracellular signal-regulated kinases MAPK3/ERK1 and MAPK1/ERK2, leading to their activation and further transduction of the signal within the MAPK/ERK cascade. Activates BRAF in a KSR1 or KSR2-dependent manner; by binding to KSR1 or KSR2 releases the inhibitory intramolecular interaction between KSR1 or KSR2 protein kinase and N-terminal domains which promotes KSR1 or KSR2-BRAF dimerization and BRAF activation. Depending on the cellular context, this pathway mediates diverse biological functions such as cell growth, adhesion, survival and differentiation, predominantly through the regulation of transcription, metabolism and cytoskeletal rearrangements. One target of the MAPK/ERK cascade is peroxisome proliferator-activated receptor gamma (PPARG), a nuclear receptor that promotes differentiation and apoptosis. MAP2K1/MEK1 has been shown to export PPARG from the nucleus. The MAPK/ERK cascade is also involved in the regulation of endosomal dynamics, including lysosome processing and endosome cycling through the perinuclear recycling compartment (PNRC), as well as in the fragmentation of the Golgi apparatus during mitosis. The chain is Dual specificity mitogen-activated protein kinase kinase 1 from Homo sapiens (Human).